Reading from the N-terminus, the 324-residue chain is Glyoxylate/hydroxypyruvate reductase B (324 aa).

Catalysis depends on residues arginine 237 and glutamate 266. Histidine 285 serves as the catalytic Proton donor.

The protein belongs to the D-isomer specific 2-hydroxyacid dehydrogenase family. GhrB subfamily. In terms of assembly, homodimer.

The protein localises to the cytoplasm. The catalysed reaction is glycolate + NADP(+) = glyoxylate + NADPH + H(+). The enzyme catalyses (R)-glycerate + NAD(+) = 3-hydroxypyruvate + NADH + H(+). It carries out the reaction (R)-glycerate + NADP(+) = 3-hydroxypyruvate + NADPH + H(+). In terms of biological role, catalyzes the NADPH-dependent reduction of glyoxylate and hydroxypyruvate into glycolate and glycerate, respectively. The chain is Glyoxylate/hydroxypyruvate reductase B from Salmonella paratyphi A (strain ATCC 9150 / SARB42).